We begin with the raw amino-acid sequence, 701 residues long: Phytyl ester synthase 2, chloroplastic (701 aa).

The transit peptide at 1-65 (MAVTVLPSVS…KNNDENRATV (65 aa)) directs the protein to the chloroplast. Residues 37–64 (SVTSTSSPPTPSSGVQRRRKNNDENRAT) are disordered.

Belongs to the diacylglycerol acyltransferase family.

It localises to the plastid. The protein localises to the chloroplast. It is found in the plastoglobule. The enzyme catalyses a 1,2-diacyl-3-O-(beta-D-galactosyl)-sn-glycerol + a 1,2-diacylglycerol = an acyl-3-O-(beta-D-galactosyl)-sn-glycerol + a triacylglycerol. It carries out the reaction a 1,2-diacylglycerol + a fatty acyl-CoA = a triacylglycerol + CoA. It catalyses the reaction a fatty acyl-[ACP] + a 1,2-diacylglycerol = a triacylglycerol + holo-[ACP]. The catalysed reaction is phytol + a fatty acyl-CoA = a fatty acid phytyl ester + CoA. The enzyme catalyses phytol + tetradecanoyl-CoA = tetradecanoate phytyl ester + CoA. It carries out the reaction a 1,3-diacylglycerol + a fatty acyl-CoA = a triacylglycerol + CoA. It catalyses the reaction 1,2-dihexanoylglycerol + tetradecanoyl-CoA = 1,2-dihexanoyl-3-tetradecanoylglycerol + CoA. The catalysed reaction is 1,2-dihexanoylglycerol + hexadecanoyl-CoA = 1,2-dihexanoyl-3-hexadecanoylglycerol + CoA. The enzyme catalyses 1,2-dihexanoylglycerol + octadecanoyl-CoA = 1,2-dihexanoyl-3-octadecanoylglycerol + CoA. It carries out the reaction (7Z,10Z,13Z)-hexadecatrienoyl-CoA + 1,2-dihexanoylglycerol = 1,2-dihexanoyl-3-(7Z,10Z,13Z-hexadecatrienoyl)-glycerol + CoA. It catalyses the reaction 1,2-dihexanoylglycerol + (9Z)-octadecenoyl-CoA = 1,2-dihexanoyl-3-(9Z-octadecenoyl)-glycerol + CoA. The catalysed reaction is 1,2-dihexanoylglycerol + (9Z,12Z,15Z)-octadecatrienoyl-CoA = 1,2-dihexanoyl-3-(9Z,12Z,15Z-octadecatrienoyl)-glycerol + CoA. The enzyme catalyses phytol + decanoyl-CoA = decanoate phytyl ester + CoA. It carries out the reaction (7Z,10Z,13Z)-hexadecatrienoyl-CoA + phytol = (7Z,10Z,13Z)-hexadecatrienoate phytyl ester + CoA. It catalyses the reaction phytol + dodecanoyl-CoA = dodecanoate phytyl ester + CoA. Its function is as follows. Acyltransferase involved in fatty acid phytyl ester synthesis in chloroplasts, a process required for the maintenance of the photosynthetic membrane integrity during abiotic stress and senescence. Exhibits phytyl ester synthesis and diacylglycerol acyltransferase activities with broad substrate specificities, and can employ acyl-CoAs, acyl carrier proteins, and galactolipids as acyl donors. The sequence is that of Phytyl ester synthase 2, chloroplastic from Arabidopsis thaliana (Mouse-ear cress).